Consider the following 406-residue polypeptide: B3 domain-containing protein Os11g0197600 (406 aa).

Positions M1–E20 are disordered. The segment at residues R30–S123 is a DNA-binding region (TF-B3 1). Residues E199–L245 form a disordered region. The span at K214–G225 shows a compositional bias: polar residues. The segment at residues A298 to V393 is a DNA-binding region (TF-B3 2).

The protein resides in the nucleus. The protein is B3 domain-containing protein Os11g0197600 of Oryza sativa subsp. japonica (Rice).